Here is a 192-residue protein sequence, read N- to C-terminus: Mediator of RNA polymerase II transcription subunit 29 (192 aa).

A disordered region spans residues 32 to 51 (MQQQSPQQMQPAPVPQQTQQ).

The protein belongs to the Mediator complex subunit 29 family. In terms of assembly, component of the Mediator complex.

It is found in the nucleus. Component of the Mediator complex, a coactivator involved in the regulated transcription of nearly all RNA polymerase II-dependent genes. Mediator functions as a bridge to convey information from gene-specific regulatory proteins to the basal RNA polymerase II transcription machinery. Mediator is recruited to promoters by direct interactions with regulatory proteins and serves as a scaffold for the assembly of a functional preinitiation complex with RNA polymerase II and the general transcription factors. In Bombyx mori (Silk moth), this protein is Mediator of RNA polymerase II transcription subunit 29 (ix).